A 395-amino-acid chain; its full sequence is Chalcone synthase (395 aa).

Position 2 is an N-acetylvaline (Val-2). Val-2 is subject to N-acetylalanine. Cys-169 is a catalytic residue.

Belongs to the thiolase-like superfamily. Chalcone/stilbene synthases family.

The enzyme catalyses (E)-4-coumaroyl-CoA + 3 malonyl-CoA + 3 H(+) = 2',4,4',6'-tetrahydroxychalcone + 3 CO2 + 4 CoA. It participates in secondary metabolite biosynthesis; flavonoid biosynthesis. Its function is as follows. The primary product of this enzyme is 4,2',4',6'-tetrahydroxychalcone (also termed naringenin-chalcone or chalcone) which can under specific conditions spontaneously isomerize into naringenin. The chain is Chalcone synthase (CHS) from Arabidopsis thaliana (Mouse-ear cress).